The following is a 248-amino-acid chain: Ribosomal RNA small subunit methyltransferase J (248 aa).

Residues 101–102, 117–118, 153–154, and Asp-171 contribute to the S-adenosyl-L-methionine site; these read RD, ER, and SS.

Belongs to the methyltransferase superfamily. RsmJ family.

Its subcellular location is the cytoplasm. It carries out the reaction guanosine(1516) in 16S rRNA + S-adenosyl-L-methionine = N(2)-methylguanosine(1516) in 16S rRNA + S-adenosyl-L-homocysteine + H(+). Specifically methylates the guanosine in position 1516 of 16S rRNA. The polypeptide is Ribosomal RNA small subunit methyltransferase J (Proteus mirabilis (strain HI4320)).